Here is a 1029-residue protein sequence, read N- to C-terminus: MISIYGLVMALMMASVLASSSRFQRVPQSQSVVENESVKFECESTDSYSELHYDWLHNAHRIAYDKRVHQIGSNLHIEAVRRTEDVGNYVCIATNLASGAREASPPAKLSVIYLESASVQLLGSNRNELLLKCHVEGASGDLEPLEIEWYRNSEKLSTWKNVQLDQHRLIIRQPGSEDDGLYRCTASNAAGRVMSKQGYVYQSSVKCLPRLPRRKNQKMMESWDKQTFLCRGKRGGAAGLESLPAAPEDLRIVQGPVGQSIIKEGEPTALTCLYELPDELKNQRIQLRWRKDGKLLRQVELGGSAPIIGHSFDSGKDALLREDARLVLHKQNGTLSFASIIASDAGQYQCQLQLEAHAPISSSPGILEVIEQLKFVPQPTSKNLELDAVVAKVHCKAQGTPTPQVQWIRDGENTTLPDQVEVDANGTLIFRNVNSEHRGNYTCLATNTQGQINATVAINVVVTPKFSVPPVGPIETSEQGTAVMHCQAIGDPKPTIQWDKDLKYLSENNTDRERFRFLENGTLEIRNVQVEDEGSYGCTIGNSAGLKREDVQLVVKTTGDGFAPEESGGDGFLVTRAVLITMTVALAYIVLVVGLMLWCRYRRQARKARLNDLSTKEAGGEQPDAAGNGKGSEQEPCLSKQHNGHSKSRSKSSGDAQKSDDTACSQQSRASKKSAHIYEQLALPRSGLSELIQIGRGEFGDVFVGKLKATLVTSPSDKDADTEKQHSNSENGSGGSGSGSTTLSTLNEKRRSKTSMDDIEEIKEEEQEQHNQSGLDQLVLVKALNKVKDEQACQEFRRQLDLLRAISHKGVVRLFGLCREKDPHYMVLEYTDWGDLKQFLLATAGKVNTATAGSSSPPPLTTSQVLAVAYQIARGMDAIYRARFTHRDLATRNCVISSEFIVKVSYPALCKDKYSREYHKHRNTLLPIRWLAPECIQEDEYTTKSDIFAYGVVVWELFNQATKLPHEELTNEQVVQRSQAGSLEWSVAEATPDSLREILLSCWVSNPKERPSFSQLGAALSKAMQIAEK.

A signal peptide spans 1 to 18; that stretch reads MISIYGLVMALMMASVLA. Residues 19-577 lie on the Extracellular side of the membrane; that stretch reads SSSRFQRVPQ…GGDGFLVTRA (559 aa). 5 Ig-like C2-type domains span residues 21–104, 105–195, 247–361, 364–459, and 464–554; these read SRFQ…REAS, PPAK…RVMS, PEDL…APIS, PGIL…VAIN, and PKFS…VQLV. N35 carries N-linked (GlcNAc...) asparagine glycosylation. 4 disulfide bridges follow: C42-C91, C133-C184, C272-C350, and C395-C443. 7 N-linked (GlcNAc...) asparagine glycosylation sites follow: N332, N413, N425, N440, N453, N508, and N520. C486 and C538 are disulfide-bonded. The chain crosses the membrane as a helical span at residues 578–598; the sequence is VLITMTVALAYIVLVVGLMLW. At 599 to 1029 the chain is on the cytoplasmic side; the sequence is CRYRRQARKA…LSKAMQIAEK (431 aa). Disordered stretches follow at residues 613–675 and 714–756; these read LSTK…KKSA and SPSD…KTSM. A compositionally biased stretch (polar residues) spans 651–669; it reads KSSGDAQKSDDTACSQQSR. Residue S674 is modified to Phosphoserine. The Protein kinase; inactive domain occupies 688–1024; the sequence is LSELIQIGRG…QLGAALSKAM (337 aa). A compositionally biased stretch (basic and acidic residues) spans 716 to 727; the sequence is SDKDADTEKQHS.

This sequence belongs to the protein kinase superfamily. Tyr protein kinase family. Insulin receptor subfamily. Interacts with plexA; component of a receptor complex that mediates the repulsive signaling in response to Semaphorin ligands.

It is found in the cell membrane. In terms of biological role, acts as a calcium-dependent, homophilic cell adhesion molecule that regulates neural recognition during the development of the nervous system. Component of the repulsive Plexin signaling response to regulate motor axon guidance at the embryonic stage. Also component of a receptor complex that is required in the adult visual system to innervate the lamina layer; specific targeting of R1-R6 axons. This chain is Tyrosine-protein kinase-like otk, found in Drosophila sechellia (Fruit fly).